The chain runs to 392 residues: ATP phosphoribosyltransferase regulatory subunit (392 aa).

This sequence belongs to the class-II aminoacyl-tRNA synthetase family. HisZ subfamily. In terms of assembly, heteromultimer composed of HisG and HisZ subunits.

It localises to the cytoplasm. It functions in the pathway amino-acid biosynthesis; L-histidine biosynthesis; L-histidine from 5-phospho-alpha-D-ribose 1-diphosphate: step 1/9. In terms of biological role, required for the first step of histidine biosynthesis. May allow the feedback regulation of ATP phosphoribosyltransferase activity by histidine. This chain is ATP phosphoribosyltransferase regulatory subunit, found in Synechococcus sp. (strain CC9902).